A 360-amino-acid polypeptide reads, in one-letter code: NAD(P)H-quinone oxidoreductase subunit 1, chloroplastic (360 aa).

9 consecutive transmembrane segments (helical) span residues 27–47, 98–118, 129–149, 165–185, 203–223, 248–268, 269–289, 297–317, and 340–360; these read IWIFVPIFSLVLGIITGVLVI, FSIGPSIAVISILLSYSVIPF, IGIFLWIAISSIAPIGLLMSG, AAQSISYEIPLTLCVLSISLL, FWGWNLWRQPIGFIIFLISSL, YSGIKFGLFYVASYLNLLISS, LFVTVLYLGGWNISIPYISIL, IFGTTIGIFITLAKTYLFLFI, and FLLPISLGNLLLTTSFQLFSL.

It belongs to the complex I subunit 1 family. NDH is composed of at least 16 different subunits, 5 of which are encoded in the nucleus.

The protein localises to the plastid. It is found in the chloroplast thylakoid membrane. It catalyses the reaction a plastoquinone + NADH + (n+1) H(+)(in) = a plastoquinol + NAD(+) + n H(+)(out). It carries out the reaction a plastoquinone + NADPH + (n+1) H(+)(in) = a plastoquinol + NADP(+) + n H(+)(out). In terms of biological role, NDH shuttles electrons from NAD(P)H:plastoquinone, via FMN and iron-sulfur (Fe-S) centers, to quinones in the photosynthetic chain and possibly in a chloroplast respiratory chain. The immediate electron acceptor for the enzyme in this species is believed to be plastoquinone. Couples the redox reaction to proton translocation, and thus conserves the redox energy in a proton gradient. The protein is NAD(P)H-quinone oxidoreductase subunit 1, chloroplastic of Lepidium virginicum (Virginia pepperweed).